The sequence spans 1237 residues: ATP-dependent RNA helicase DEAH13 (1237 aa).

Disordered stretches follow at residues 1-51 (MASV…NSNV) and 115-148 (AMQL…EPTT). The segment covering 24–38 (SNKMQDKLNSNNNTG) has biased composition (polar residues). Residues 131 to 143 (SVEQNDNDDDSCM) show a composition bias toward acidic residues. The Helicase ATP-binding domain maps to 251 to 443 (MEAINRHPAV…KRLFPNIPPL (193 aa)). 264 to 271 (GQTGCGKT) contributes to the ATP binding site. The DEAH box motif lies at 367-370 (DEAH). The segment at 543–585 (DDDSNNQNSRFSSHGEDPSDIGDGNYDDDFEEEDMYESDEDRD) is disordered. Residues 567–585 (NYDDDFEEEDMYESDEDRD) show a composition bias toward acidic residues. Positions 605–776 (ALRAAFNALA…GVILLMKSMN (172 aa)) constitute a Helicase C-terminal domain. The segment at 876 to 910 (EKKNESKDADKTVKQEDKQRKKDRKEKIKAARDRF) is disordered.

This sequence belongs to the DEAD box helicase family. DEAH subfamily.

The enzyme catalyses ATP + H2O = ADP + phosphate + H(+). The polypeptide is ATP-dependent RNA helicase DEAH13 (Arabidopsis thaliana (Mouse-ear cress)).